A 105-amino-acid polypeptide reads, in one-letter code: PTS system lactose-specific EIIA component (105 aa).

The region spanning Glu-4 to Arg-102 is the PTS EIIA type-3 domain. His-78 functions as the Tele-phosphohistidine intermediate in the catalytic mechanism. His-78 is modified (phosphohistidine; by HPr). Asp-81 lines the Mg(2+) pocket.

Homotrimer. It depends on Mg(2+) as a cofactor.

The protein localises to the cytoplasm. Functionally, the phosphoenolpyruvate-dependent sugar phosphotransferase system (sugar PTS), a major carbohydrate active transport system, catalyzes the phosphorylation of incoming sugar substrates concomitantly with their translocation across the cell membrane. The enzyme II LacEF PTS system is involved in lactose transport. The protein is PTS system lactose-specific EIIA component of Lactococcus lactis subsp. lactis (Streptococcus lactis).